The following is an 81-amino-acid chain: Photosystem I iron-sulfur center (81 aa).

4Fe-4S ferredoxin-type domains lie at 1-31 (MAHSVKIYDTCIGCTQCVRACPTDVLEMVPW) and 39-68 (IASAPRTEDCVGCKRCESACPTDYLSVRVY). Residues cysteine 11, cysteine 14, cysteine 17, cysteine 21, cysteine 48, cysteine 51, cysteine 54, and cysteine 58 each coordinate [4Fe-4S] cluster.

The eukaryotic PSI reaction center is composed of at least 11 subunits. It depends on [4Fe-4S] cluster as a cofactor.

It is found in the plastid. The protein resides in the chloroplast thylakoid membrane. It carries out the reaction reduced [plastocyanin] + hnu + oxidized [2Fe-2S]-[ferredoxin] = oxidized [plastocyanin] + reduced [2Fe-2S]-[ferredoxin]. Functionally, apoprotein for the two 4Fe-4S centers FA and FB of photosystem I (PSI); essential for photochemical activity. FB is the terminal electron acceptor of PSI, donating electrons to ferredoxin. The C-terminus interacts with PsaA/B/D and helps assemble the protein into the PSI complex. Required for binding of PsaD and PsaE to PSI. PSI is a plastocyanin-ferredoxin oxidoreductase, converting photonic excitation into a charge separation, which transfers an electron from the donor P700 chlorophyll pair to the spectroscopically characterized acceptors A0, A1, FX, FA and FB in turn. This Welwitschia mirabilis (Tree tumbo) protein is Photosystem I iron-sulfur center.